The primary structure comprises 539 residues: Chaperonin GroEL (539 aa).

ATP is bound by residues 29–32 (TLGP), 86–90 (DGTTT), Gly-413, 476–478 (NAA), and Asp-492.

The protein belongs to the chaperonin (HSP60) family. In terms of assembly, forms a cylinder of 14 subunits composed of two heptameric rings stacked back-to-back. Interacts with the co-chaperonin GroES.

Its subcellular location is the cytoplasm. The catalysed reaction is ATP + H2O + a folded polypeptide = ADP + phosphate + an unfolded polypeptide.. Together with its co-chaperonin GroES, plays an essential role in assisting protein folding. The GroEL-GroES system forms a nano-cage that allows encapsulation of the non-native substrate proteins and provides a physical environment optimized to promote and accelerate protein folding. The sequence is that of Chaperonin GroEL from Geobacillus sp. (strain WCH70).